Consider the following 135-residue polypeptide: Ribonuclease P protein component (135 aa).

Belongs to the RnpA family. As to quaternary structure, consists of a catalytic RNA component (M1 or rnpB) and a protein subunit.

It carries out the reaction Endonucleolytic cleavage of RNA, removing 5'-extranucleotides from tRNA precursor.. Its function is as follows. RNaseP catalyzes the removal of the 5'-leader sequence from pre-tRNA to produce the mature 5'-terminus. It can also cleave other RNA substrates such as 4.5S RNA. The protein component plays an auxiliary but essential role in vivo by binding to the 5'-leader sequence and broadening the substrate specificity of the ribozyme. This chain is Ribonuclease P protein component, found in Saccharophagus degradans (strain 2-40 / ATCC 43961 / DSM 17024).